The following is a 270-amino-acid chain: Acyl-[acyl-carrier-protein]--UDP-N-acetylglucosamine O-acyltransferase (270 aa).

It belongs to the transferase hexapeptide repeat family. LpxA subfamily. Homotrimer.

The protein resides in the cytoplasm. The catalysed reaction is a (3R)-hydroxyacyl-[ACP] + UDP-N-acetyl-alpha-D-glucosamine = a UDP-3-O-[(3R)-3-hydroxyacyl]-N-acetyl-alpha-D-glucosamine + holo-[ACP]. Its pathway is glycolipid biosynthesis; lipid IV(A) biosynthesis; lipid IV(A) from (3R)-3-hydroxytetradecanoyl-[acyl-carrier-protein] and UDP-N-acetyl-alpha-D-glucosamine: step 1/6. In terms of biological role, involved in the biosynthesis of lipid A, a phosphorylated glycolipid that anchors the lipopolysaccharide to the outer membrane of the cell. The chain is Acyl-[acyl-carrier-protein]--UDP-N-acetylglucosamine O-acyltransferase from Sinorhizobium medicae (strain WSM419) (Ensifer medicae).